The following is a 297-amino-acid chain: N-acetylneuraminate lyase (297 aa).

Aceneuramate-binding residues include Ser-47 and Thr-48. Catalysis depends on Tyr-137, which acts as the Proton donor. The active-site Schiff-base intermediate with substrate is Lys-165. Aceneuramate contacts are provided by Thr-167, Gly-189, Asp-191, Glu-192, and Ser-208.

It belongs to the DapA family. NanA subfamily. In terms of assembly, homotetramer.

The protein resides in the cytoplasm. The enzyme catalyses aceneuramate = aldehydo-N-acetyl-D-mannosamine + pyruvate. Its pathway is amino-sugar metabolism; N-acetylneuraminate degradation; D-fructose 6-phosphate from N-acetylneuraminate: step 1/5. Catalyzes the reversible aldol cleavage of N-acetylneuraminic acid (sialic acid; Neu5Ac) to form pyruvate and N-acetylmannosamine (ManNAc) via a Schiff base intermediate. The polypeptide is N-acetylneuraminate lyase (Escherichia coli (strain SE11)).